The sequence spans 1244 residues: Putative late blight resistance protein homolog R1A-4 (1244 aa).

Coiled-coil stretches lie at residues 411 to 434 (RYSDSLAFLKNQLQVIQTEFESLQ) and 526 to 548 (PRMNEEIVGFKDVIENLRNQLLN). Positions 527–755 (RMNEEIVGFK…ECWEQVANDL (229 aa)) constitute an NB-ARC domain. 560–567 (GMPGLGKT) lines the ATP pocket. LRR repeat units lie at residues 978–1004 (LWNLETLILNRRSVVHKILLPSTVWDM), 1079–1103 (PIRLEILKLYRSNAFKAIPFCISAP), 1127–1150 (LKNLEVLKLYYVEFGDHREWKVSN), 1153–1178 (FPQLKILKLEDVSLMKWIVADDAFPN), and 1213–1237 (ESVVKSAMNIQETQVEDYQNTNFKL).

Belongs to the disease resistance NB-LRR family.

The protein resides in the cytoplasm. Its subcellular location is the membrane. Functionally, confers resistance to late blight (Phytophthora infestans) races carrying the avirulence gene Avr1. Resistance proteins guard the plant against pathogens that contain an appropriate avirulence protein via an indirect interaction with this avirulence protein. That triggers a defense system including the hypersensitive response, which restricts the pathogen growth. The sequence is that of Putative late blight resistance protein homolog R1A-4 (R1A-4) from Solanum demissum (Wild potato).